We begin with the raw amino-acid sequence, 516 residues long: BAR/IMD domain-containing adapter protein 2-like 1 (516 aa).

The region spanning 1 to 249 is the IMD domain; it reads MSRGPEEVNR…MNMIEEIKTP (249 aa). The stretch at 115–148 forms a coiled coil; that stretch reads MNATLKRYQAEHRNKLDSLEKSQAELKKIRRKSQ. Thr248 and Thr257 each carry phosphothreonine. Ser261 and Ser281 each carry phosphoserine. The disordered stretch occupies residues 303-328; the sequence is NPATAGQSAEKTNNSTANTGDDPSLQ. The residue at position 332 (Ser332) is a Phosphoserine. The SH3 domain maps to 340–403; that stretch reads MKKQKVKTIF…PSSYTKLLEE (64 aa). Thr413 carries the post-translational modification Phosphothreonine. Ser415, Ser421, and Ser423 each carry phosphoserine. The segment at 454 to 516 is disordered; it reads ADAAKIPSTS…TNDRSAPIIR (63 aa). Polar residues predominate over residues 474–485; it reads ATSTSPSDSNGT. The segment at 488–516 is binds F-actin; it reads PPFLSGENPFATVKLRPTVTNDRSAPIIR.

As to quaternary structure, interacts with RAC1. Binds to F-actin. Interacts with FASLG. Phosphorylated on tyrosine in response to insulin.

The protein resides in the cytoplasm. Its subcellular location is the cytoskeleton. Functionally, may function as adapter protein. Involved in the formation of clusters of actin bundles. Plays a role in the reorganization of the actin cytoskeleton in response to bacterial infection. This is BAR/IMD domain-containing adapter protein 2-like 1 (Baiap2l1) from Rattus norvegicus (Rat).